The sequence spans 378 residues: Succinate--CoA ligase [GDP-forming] subunit beta (378 aa).

The 227-residue stretch at Lys-9–Glu-235 folds into the ATP-grasp domain. GTP-binding positions include Lys-45, Gly-52–Gly-54, Val-94, and Glu-99. Mg(2+) contacts are provided by Asn-190 and Asp-204. Substrate-binding positions include Asn-255 and Gly-312–Thr-314.

Belongs to the succinate/malate CoA ligase beta subunit family. In terms of assembly, heterotetramer of two alpha and two beta subunits. Mg(2+) is required as a cofactor.

It carries out the reaction GTP + succinate + CoA = succinyl-CoA + GDP + phosphate. The enzyme catalyses succinate + ATP + CoA = succinyl-CoA + ADP + phosphate. It participates in carbohydrate metabolism; tricarboxylic acid cycle; succinate from succinyl-CoA (ligase route): step 1/1. In terms of biological role, succinyl-CoA synthetase functions in the citric acid cycle (TCA), coupling the hydrolysis of succinyl-CoA to the synthesis of either ATP or GTP and thus represents the only step of substrate-level phosphorylation in the TCA. The beta subunit provides nucleotide specificity of the enzyme and binds the substrate succinate, while the binding sites for coenzyme A and phosphate are found in the alpha subunit. Can use either ATP or GTP, but prefers GTP. The sequence is that of Succinate--CoA ligase [GDP-forming] subunit beta from Thermus thermophilus.